The sequence spans 305 residues: Elongation factor Ts (305 aa).

Residues 79–82 (TDFV) form an involved in Mg(2+) ion dislocation from EF-Tu region.

It belongs to the EF-Ts family.

The protein localises to the cytoplasm. In terms of biological role, associates with the EF-Tu.GDP complex and induces the exchange of GDP to GTP. It remains bound to the aminoacyl-tRNA.EF-Tu.GTP complex up to the GTP hydrolysis stage on the ribosome. The chain is Elongation factor Ts from Brucella suis biovar 1 (strain 1330).